The chain runs to 103 residues: Integration host factor subunit beta (103 aa).

The tract at residues 62-81 (RNPKTGESVALPGKHVPHFK) is disordered.

The protein belongs to the bacterial histone-like protein family. As to quaternary structure, heterodimer of an alpha and a beta chain.

Functionally, this protein is one of the two subunits of integration host factor, a specific DNA-binding protein that functions in genetic recombination as well as in transcriptional and translational control. This is Integration host factor subunit beta from Xanthomonas campestris pv. campestris (strain B100).